A 322-amino-acid polypeptide reads, in one-letter code: Olfactory receptor 1J1 (322 aa).

At 1–25 (MSPENQSSVSEFLLLGLPIRPEQQA) the chain is on the extracellular side. A glycan (N-linked (GlcNAc...) asparagine) is linked at Asn5. The helical transmembrane segment at 26 to 49 (VFFALFLGMYLTTVLGNLLIMLLI) threads the bilayer. At 50-57 (QLDSHLHT) the chain is on the cytoplasmic side. The helical transmembrane segment at 58-79 (PMYFFLSHLALTDISFSSVTVP) threads the bilayer. Residues 80 to 100 (KMLMNMQTQHLAVFYKGCISQ) are Extracellular-facing. Cysteines 97 and 189 form a disulfide. A helical membrane pass occupies residues 101 to 120 (TYFFIFFADLDSFLITSMAY). Residues 121–139 (DRYVAICHPLHYATIMTQS) lie on the Cytoplasmic side of the membrane. Residues 140-158 (QCVMLVAGSWVIACACALL) form a helical membrane-spanning segment. Over 159-196 (HTLLLAQLSFCADHIIPHYFCDLGALLKLSCSDTSLNQ) the chain is Extracellular. Residues 197–219 (LAIFTAALTAIMLPFLCILVSYG) traverse the membrane as a helical segment. The Cytoplasmic segment spans residues 220–236 (HIGVTILQIPSTKGICK). Residues 237–259 (ALSTCGSHLSVVTIYYRTIIGLY) form a helical membrane-spanning segment. Over 260 to 272 (FLPPSSNTNDKNI) the chain is Extracellular. A helical transmembrane segment spans residues 273-292 (IASVIYTAVTPMLNPFIYSL). Residues 293-322 (RNKDIKGALRKLLSRSGAVAHACNLNTLGG) are Cytoplasmic-facing.

This sequence belongs to the G-protein coupled receptor 1 family.

It is found in the cell membrane. Odorant receptor. The protein is Olfactory receptor 1J1 of Homo sapiens (Human).